The chain runs to 545 residues: Glucose-6-phosphate isomerase (545 aa).

Glutamate 343 acts as the Proton donor in catalysis. Active-site residues include histidine 374 and lysine 513.

The protein belongs to the GPI family.

Its subcellular location is the cytoplasm. The enzyme catalyses alpha-D-glucose 6-phosphate = beta-D-fructose 6-phosphate. It participates in carbohydrate biosynthesis; gluconeogenesis. It functions in the pathway carbohydrate degradation; glycolysis; D-glyceraldehyde 3-phosphate and glycerone phosphate from D-glucose: step 2/4. Catalyzes the reversible isomerization of glucose-6-phosphate to fructose-6-phosphate. The protein is Glucose-6-phosphate isomerase of Methylibium petroleiphilum (strain ATCC BAA-1232 / LMG 22953 / PM1).